The primary structure comprises 475 residues: Flotillin-like protein 4 (475 aa).

2 coiled-coil regions span residues 235–255 (ENQR…KKAA) and 305–325 (QYET…KEAE).

The protein belongs to the band 7/mec-2 family. Flotillin subfamily. Expressed in roots and nodules. Primarily expressed in vascular tissues. Upon induction of nodulation, expansion of expression in the root cortex in the region of elongating root hairs, which will eventually become colonized by bacteria. Expressed in the infection zone in nodules.

The protein localises to the membrane. It localises to the caveola. It is found in the cell membrane. Its function is as follows. May act as a scaffolding protein within caveolar membranes, functionally participating in formation of caveolae or caveolae-like vesicles. Required for normal infection threads initiation and elongation and nodulation. Probably involved in polar growth of the infection thread. This is Flotillin-like protein 4 (FLOT4) from Medicago truncatula (Barrel medic).